Consider the following 333-residue polypeptide: Dehydrodolichyl diphosphate synthase complex subunit DHDDS (333 aa).

5 residues coordinate (2E,6E)-farnesyl diphosphate: D34, G35, R37, R38, and R85. Isopentenyl diphosphate-binding residues include D34, G35, R37, R38, R85, R205, R211, and S213. D34 contributes to the Mg(2+) binding site.

The protein belongs to the UPP synthase family. In terms of assembly, the active dehydrodolichyl diphosphate synthase complex is a heterotetramer composed of a dimer of heterodimer of DHDDS and NUS1. Interacts with NPC2. The cofactor is Mg(2+). As to expression, ubiquitous. Expressed at high levels in testis and kidney. Expressed in epididymis (at protein level).

The protein resides in the endoplasmic reticulum membrane. The enzyme catalyses n isopentenyl diphosphate + (2E,6E)-farnesyl diphosphate = a di-trans,poly-cis-polyprenyl diphosphate + n diphosphate. The protein operates within protein modification; protein glycosylation. Its pathway is lipid metabolism. Its activity is regulated as follows. Activated by phospholipids including cardiolipin, phosphatidylcholine, phosphatidylethanolamine, phosphatidylinositol and phosphatidylserine. With NUS1, forms the dehydrodolichyl diphosphate synthase (DDS) complex, an essential component of the dolichol monophosphate (Dol-P) biosynthetic machinery. Both subunits contribute to enzymatic activity, i.e. condensation of multiple copies of isopentenyl pyrophosphate (IPP) to farnesyl pyrophosphate (FPP) to produce dehydrodolichyl diphosphate (Dedol-PP), a precursor of dolichol phosphate which is utilized as a sugar carrier in protein glycosylation in the endoplasmic reticulum (ER). Synthesizes long-chain polyprenols, mostly of C95 and C100 chain length. Regulates the glycosylation and stability of nascent NPC2, thereby promoting trafficking of LDL-derived cholesterol. This chain is Dehydrodolichyl diphosphate synthase complex subunit DHDDS, found in Homo sapiens (Human).